Consider the following 480-residue polypeptide: Ribosomal RNA small subunit methyltransferase F (480 aa).

S-adenosyl-L-methionine contacts are provided by residues 125-131, E149, D176, and D194; that span reads AAAPGSK. Residue C247 is the Nucleophile of the active site.

Belongs to the class I-like SAM-binding methyltransferase superfamily. RsmB/NOP family.

The protein localises to the cytoplasm. It catalyses the reaction cytidine(1407) in 16S rRNA + S-adenosyl-L-methionine = 5-methylcytidine(1407) in 16S rRNA + S-adenosyl-L-homocysteine + H(+). Specifically methylates the cytosine at position 1407 (m5C1407) of 16S rRNA. The sequence is that of Ribosomal RNA small subunit methyltransferase F from Enterobacter sp. (strain 638).